We begin with the raw amino-acid sequence, 233 residues long: uncharacterized protein (233 aa).

The chain crosses the membrane as a helical span at residues 21 to 41 (LNILIAIVSILIVVVAANLFI). Residues 44–163 (PSSKDVSKDS…GEHAATYDSS (120 aa)) form a disordered region. Composition is skewed to basic and acidic residues over residues 48-57 (DVSKDSETAQ), 66-108 (KTEK…KKDD), and 135-144 (DVEKTYENPD).

The protein resides in the cell membrane. This is an uncharacterized protein from Bacillus subtilis (strain 168).